The chain runs to 173 residues: MKRPEKEAVVAQLTDKFRNADAIYLTEYRGLTVPQISELREKLGRDTSYTVAKNTLVRIAAKEAGIEGLDELLAGPTAVTFVKGDFIEAAKTLRDFAKTNKALIIKGGFADGTVYDAEGAKKLADLKSRPQLLAEFAGDIKATMSKAAYLFNALPTKAVRTIDALREKQEKAA.

Belongs to the universal ribosomal protein uL10 family. In terms of assembly, part of the ribosomal stalk of the 50S ribosomal subunit. The N-terminus interacts with L11 and the large rRNA to form the base of the stalk. The C-terminus forms an elongated spine to which L12 dimers bind in a sequential fashion forming a multimeric L10(L12)X complex.

Forms part of the ribosomal stalk, playing a central role in the interaction of the ribosome with GTP-bound translation factors. The sequence is that of Large ribosomal subunit protein uL10 from Bifidobacterium adolescentis (strain ATCC 15703 / DSM 20083 / NCTC 11814 / E194a).